The chain runs to 132 residues: Small ribosomal subunit protein eS24 (132 aa).

The segment covering 92–101 (LARHGLYEKK) has biased composition (basic and acidic residues). Residues 92-132 (LARHGLYEKKRPTRKQRKERKNRMKKVRGTKKSKVGAAAKK) form a disordered region. Residues 102-132 (RPTRKQRKERKNRMKKVRGTKKSKVGAAAKK) show a composition bias toward basic residues.

Belongs to the eukaryotic ribosomal protein eS24 family.

The chain is Small ribosomal subunit protein eS24 (RpS24) from Spodoptera frugiperda (Fall armyworm).